The chain runs to 289 residues: Acetylglutamate kinase (289 aa).

Residues 65–66, Arg-87, and Asn-187 contribute to the substrate site; that span reads GG.

Belongs to the acetylglutamate kinase family. ArgB subfamily.

The protein localises to the cytoplasm. The enzyme catalyses N-acetyl-L-glutamate + ATP = N-acetyl-L-glutamyl 5-phosphate + ADP. Its pathway is amino-acid biosynthesis; L-arginine biosynthesis; N(2)-acetyl-L-ornithine from L-glutamate: step 2/4. In terms of biological role, catalyzes the ATP-dependent phosphorylation of N-acetyl-L-glutamate. The polypeptide is Acetylglutamate kinase (Chromobacterium violaceum (strain ATCC 12472 / DSM 30191 / JCM 1249 / CCUG 213 / NBRC 12614 / NCIMB 9131 / NCTC 9757 / MK)).